A 156-amino-acid polypeptide reads, in one-letter code: Small ribosomal subunit protein uS7 (156 aa).

Belongs to the universal ribosomal protein uS7 family. As to quaternary structure, part of the 30S ribosomal subunit. Contacts proteins S9 and S11.

In terms of biological role, one of the primary rRNA binding proteins, it binds directly to 16S rRNA where it nucleates assembly of the head domain of the 30S subunit. Is located at the subunit interface close to the decoding center, probably blocks exit of the E-site tRNA. The protein is Small ribosomal subunit protein uS7 of Burkholderia ambifaria (strain MC40-6).